Consider the following 239-residue polypeptide: DNA repair protein RecO (239 aa).

Belongs to the RecO family.

Functionally, involved in DNA repair and RecF pathway recombination. The chain is DNA repair protein RecO from Stenotrophomonas maltophilia (strain K279a).